The sequence spans 356 residues: tRNA N6-adenosine threonylcarbamoyltransferase (356 aa).

Fe cation is bound by residues H115 and H119. Substrate is bound by residues 138–142, D171, G184, and N283; that span reads LVSGG. A Fe cation-binding site is contributed by D311.

It belongs to the KAE1 / TsaD family. Fe(2+) is required as a cofactor.

It localises to the cytoplasm. It carries out the reaction L-threonylcarbamoyladenylate + adenosine(37) in tRNA = N(6)-L-threonylcarbamoyladenosine(37) in tRNA + AMP + H(+). In terms of biological role, required for the formation of a threonylcarbamoyl group on adenosine at position 37 (t(6)A37) in tRNAs that read codons beginning with adenine. Is involved in the transfer of the threonylcarbamoyl moiety of threonylcarbamoyl-AMP (TC-AMP) to the N6 group of A37, together with TsaE and TsaB. TsaD likely plays a direct catalytic role in this reaction. The chain is tRNA N6-adenosine threonylcarbamoyltransferase from Prochlorococcus marinus (strain MIT 9303).